The sequence spans 77 residues: Translation initiation factor IF-1, chloroplastic (77 aa).

Residues 1 to 71 (MKEQKLIHEG…TRGRIIYRLR (71 aa)) form the S1-like domain.

The protein belongs to the IF-1 family. In terms of assembly, component of the 30S ribosomal translation pre-initiation complex which assembles on the 30S ribosome in the order IF-2 and IF-3, IF-1 and N-formylmethionyl-tRNA(fMet); mRNA recruitment can occur at any time during PIC assembly.

The protein resides in the plastid. It localises to the chloroplast. Functionally, one of the essential components for the initiation of protein synthesis. Stabilizes the binding of IF-2 and IF-3 on the 30S subunit to which N-formylmethionyl-tRNA(fMet) subsequently binds. Helps modulate mRNA selection, yielding the 30S pre-initiation complex (PIC). Upon addition of the 50S ribosomal subunit IF-1, IF-2 and IF-3 are released leaving the mature 70S translation initiation complex. The sequence is that of Translation initiation factor IF-1, chloroplastic from Liriodendron tulipifera (Tuliptree).